A 701-amino-acid polypeptide reads, in one-letter code: CRS2-associated factor 1, chloroplastic (701 aa).

A chloroplast-targeting transit peptide spans 1 to 37 (MSLKLNTPFPIFAPSLFPNHNPRAPSEIRFSRWGNAN). 2 disordered regions span residues 68-136 (VHTH…PEVK) and 191-221 (LPQS…QKPG). 2 consecutive CRM domains span residues 241–337 (EPLT…TRPR) and 359–455 (EGLT…LTTP). A disordered region spans residues 471 to 532 (LPEDDEPSVS…SLQSWSTKDV (62 aa)). 2 stretches are compositionally biased toward polar residues: residues 479 to 492 (VSPN…QNPP) and 520 to 530 (TINSLQSWSTK). Residues 564 to 586 (RVLILMKQAVESGTALVLDAADL) form a CRS2 binding region.

Interacts with CRS2 and RNA. Part of large ribonucleo-protein complexes that include group IIB introns, CRS2 and CAF1.

It localises to the plastid. The protein resides in the chloroplast stroma. In terms of biological role, required for the splicing of group IIB introns in chloroplasts. Forms splicing particles with CRS2. Interacts with RNA and confers intron specificity of the splicing particles. The protein is CRS2-associated factor 1, chloroplastic of Arabidopsis thaliana (Mouse-ear cress).